We begin with the raw amino-acid sequence, 304 residues long: uncharacterized protein (304 aa).

A run of 9 helical transmembrane segments spans residues 9-29 (VFYVLLMGLGFPIMRFMSIHF), 67-87 (IILYLFIYLFILGIFMTGNMF), 100-120 (AGSIFGILAMPLAIIIAGIFF), 131-151 (EFYIGELLAIIGSLIFVINSS), 159-179 (FFLGAIFLFTAIFIQSVQNLI), 189-209 (AVVISASTATISGVLFLCLAF), 222-242 (IGMLIGLVCAGFYGMLTGMLM), 252-272 (ITVFNILQLLIPLSTAIIGYL), and 278-298 (INIYQGISGIIVIIGCVLALK). EamA domains lie at 13–148 (LLMG…IFVI) and 171–298 (FIQS…LALK).

It belongs to the EamA transporter family.

Its subcellular location is the cell membrane. This is an uncharacterized protein from Haemophilus influenzae (strain ATCC 51907 / DSM 11121 / KW20 / Rd).